Here is a 216-residue protein sequence, read N- to C-terminus: Putative flagellar filament outer layer-like protein (216 aa).

The interval 1–22 (MFAQDAAQTGEQTTQNQGENGN) is disordered. Residues 8 to 22 (QTGEQTTQNQGENGN) are compositionally biased toward low complexity.

Its subcellular location is the periplasmic flagellum. It localises to the periplasm. In terms of biological role, might be part of the flagella. This is Putative flagellar filament outer layer-like protein (flaAL) from Brachyspira hyodysenteriae (strain ATCC 49526 / WA1).